An 816-amino-acid polypeptide reads, in one-letter code: Mitogen-activated protein kinase 7 (816 aa).

Positions 1 to 26 (MAEPLKEEDGEDGSAEPPGPVKAEPA) are disordered. Alanine 2 bears the N-acetylalanine mark. Residues 2 to 77 (AEPLKEEDGE…VVSSARRRLT (76 aa)) form a required for cytoplasmic targeting region. In terms of domain architecture, Protein kinase spans 55–347 (YEIIETIGNG…AAAALRHPFL (293 aa)). Residues 61–69 (IGNGAYGVV) and lysine 84 each bind ATP. The required for binding to MAP2K5 stretch occupies residues 78–139 (GQQVAIKKIP…FKSVYVVLDL (62 aa)). Residues 140–406 (MESDLHQIIH…QQIRFQPSLQ (267 aa)) are necessary for oligomerization. Catalysis depends on aspartate 182, which acts as the Proton acceptor. The TXY motif lies at 219-221 (TEY). A disordered region spans residues 406–737 (QPVASEPGCP…PVFSGTPKGS (332 aa)). The segment at 407 to 806 (PVASEPGCPD…REIQMDSPML (400 aa)) is may not be required for kinase activity; required to stimulate MEF2C activity. Composition is skewed to pro residues over residues 433–445 (SPPP…PGPA) and 454–463 (QPPPPVSEPA). The span at 476–486 (KAALKAALLKS) shows a compositional bias: low complexity. Composition is skewed to basic and acidic residues over residues 502–519 (PEPR…EREE), 527–544 (RAKE…KERG), and 563–573 (DNDRSLLERWT). Residues 505-539 (RKPVTAQERQREREEKRRRRQERAKEREKRRQERE) carry the Nuclear localization signal motif. A compositionally biased stretch (low complexity) spans 578 to 587 (PAAPALTSVP). Composition is skewed to pro residues over residues 588 to 610 (APAP…PGPV) and 628 to 655 (VPQP…PAPP). Low complexity predominate over residues 676–685 (PGSSTPGVLP). Pro residues predominate over residues 686–695 (YFPPGLPPPD). Residues 701 to 720 (QSSMSESPDVNLVTQQLSKS) show a composition bias toward polar residues. Phosphoserine is present on serine 720. Threonine 733 carries the phosphothreonine modification.

This sequence belongs to the protein kinase superfamily. CMGC Ser/Thr protein kinase family. MAP kinase subfamily. As to quaternary structure, interacts with MAP2K5. Forms oligomers. Interacts with MEF2A, MEF2C and MEF2D; the interaction phosphorylates the MEF2s and enhances transcriptional activity of MEF2A, MEF2C but not MEF2D. Interacts with SGK1. Preferentially interacts with PML isoform PML-4 but shows interaction also with its other isoforms: isoform PML-1, isoform PML-2, isoform PML-3 and isoform PML-6. Interacts (via N-terminal half) with HSP90AB1-CDC37 chaperone complex in resting cells; the interaction is MAP2K5-independent and prevents MAPK7 from ubiquitination and proteasomal degradation. Interacts with STUB1/CHIP; the interaction is enhanced in the presence of IGF1 or MAP2K5 and promotes STUB1/CHIP E3 ligase activity. The cofactor is Mg(2+). Dually phosphorylated on Thr-219 and Tyr-221, which activates the enzyme. Autophosphorylated in vitro on threonine and tyrosine residues when the C-terminal part of the kinase, which could have a regulatory role, is absent. Expressed in many adult tissues. Abundant in heart, placenta, lung, kidney and skeletal muscle. Not detectable in liver.

It localises to the cytoplasm. Its subcellular location is the nucleus. It is found in the PML body. The enzyme catalyses L-seryl-[protein] + ATP = O-phospho-L-seryl-[protein] + ADP + H(+). It catalyses the reaction L-threonyl-[protein] + ATP = O-phospho-L-threonyl-[protein] + ADP + H(+). Its activity is regulated as follows. Activated by tyrosine and threonine phosphorylation. Activated in response to hyperosmolarity, hydrogen peroxide, and epidermal growth factor (EGF). Plays a role in various cellular processes such as proliferation, differentiation and cell survival. The upstream activator of MAPK7 is the MAPK kinase MAP2K5. Upon activation, it translocates to the nucleus and phosphorylates various downstream targets including MEF2C. EGF activates MAPK7 through a Ras-independent and MAP2K5-dependent pathway. As part of the MAPK/ERK signaling pathway, acts as a negative regulator of apoptosis in cardiomyocytes via interaction with STUB1/CHIP and promotion of STUB1-mediated ubiquitination and degradation of ICER-type isoforms of CREM. May have a role in muscle cell differentiation. May be important for endothelial function and maintenance of blood vessel integrity. MAP2K5 and MAPK7 interact specifically with one another and not with MEK1/ERK1 or MEK2/ERK2 pathways. Phosphorylates SGK1 at Ser-78 and this is required for growth factor-induced cell cycle progression. Involved in the regulation of p53/TP53 by disrupting the PML-MDM2 interaction. This Homo sapiens (Human) protein is Mitogen-activated protein kinase 7 (MAPK7).